A 254-amino-acid chain; its full sequence is Precorrin-3B C(17)-methyltransferase (254 aa).

This sequence belongs to the precorrin methyltransferase family.

It carries out the reaction precorrin-3B + S-adenosyl-L-methionine = precorrin-4 + S-adenosyl-L-homocysteine + 3 H(+). The protein operates within cofactor biosynthesis; adenosylcobalamin biosynthesis; cob(II)yrinate a,c-diamide from precorrin-2 (aerobic route): step 3/10. In terms of biological role, methyltransferase that catalyzes the methylation of C-17 in precorrin-3B to form precorrin-4. The polypeptide is Precorrin-3B C(17)-methyltransferase (cobJ) (Sinorhizobium sp).